An 867-amino-acid polypeptide reads, in one-letter code: Protein melted homolog (867 aa).

Residues 480-505 (MPSSSRTNVHLSQAASSSRGHSLPQT) form a disordered region. In terms of domain architecture, PH spans 753-860 (EKVLEGQLKE…WLHCLQIAMA (108 aa)).

Belongs to the MELT/VEPH family.

The protein resides in the cell membrane. The chain is Protein melted homolog from Caenorhabditis briggsae.